A 148-amino-acid chain; its full sequence is MKTLLTLGLLLLSVTAQAKVYERCEFARTLKRNGMAGYYGVSLADWVCLAQHESNYNTRATNYNRGDQSTDYGIFQINSRYWCNDGKTPRAVNACGINCSALLQDDITAAIQCAKRVVRDPQGIRAWVAWRAHCQNRDLSQYIRNCGV.

Residues 1-18 (MKTLLTLGLLLLSVTAQA) form the signal peptide. The region spanning 19-148 (KVYERCEFAR…LSQYIRNCGV (130 aa)) is the C-type lysozyme domain. Intrachain disulfides connect Cys-24/Cys-146, Cys-48/Cys-134, Cys-83/Cys-99, and Cys-95/Cys-113. Residues Glu-53 and Asp-71 contribute to the active site.

It belongs to the glycosyl hydrolase 22 family. In terms of assembly, monomer. As to expression, expressed weakly in myeloblasts, moderately in immature macrophages, and strongly in both mature macrophages and macrophage-rich tissues.

Its subcellular location is the secreted. The enzyme catalyses Hydrolysis of (1-&gt;4)-beta-linkages between N-acetylmuramic acid and N-acetyl-D-glucosamine residues in a peptidoglycan and between N-acetyl-D-glucosamine residues in chitodextrins.. Lysozymes have primarily a bacteriolytic function; those in tissues and body fluids are associated with the monocyte-macrophage system and enhance the activity of immunoagents. Lyz2 is active against a range of Gram-positive and Gram-negative bacteria. More effective than Lyz1 in killing Gram-negative bacteria. Lyz1 and Lyz2 are equally effective in killing Gram-positive bacteria. In Mus musculus (Mouse), this protein is Lysozyme C-2 (Lyz2).